Here is a 366-residue protein sequence, read N- to C-terminus: tRNA N6-adenosine threonylcarbamoyltransferase (366 aa).

2 residues coordinate Fe cation: H119 and H123. Substrate is bound by residues 142–146 (LVSGG), D175, G188, D192, and N281. D309 contacts Fe cation.

This sequence belongs to the KAE1 / TsaD family. The cofactor is Fe(2+).

Its subcellular location is the cytoplasm. It catalyses the reaction L-threonylcarbamoyladenylate + adenosine(37) in tRNA = N(6)-L-threonylcarbamoyladenosine(37) in tRNA + AMP + H(+). Required for the formation of a threonylcarbamoyl group on adenosine at position 37 (t(6)A37) in tRNAs that read codons beginning with adenine. Is involved in the transfer of the threonylcarbamoyl moiety of threonylcarbamoyl-AMP (TC-AMP) to the N6 group of A37, together with TsaE and TsaB. TsaD likely plays a direct catalytic role in this reaction. This is tRNA N6-adenosine threonylcarbamoyltransferase from Synechococcus sp. (strain JA-3-3Ab) (Cyanobacteria bacterium Yellowstone A-Prime).